A 320-amino-acid polypeptide reads, in one-letter code: Aspartate carbamoyltransferase catalytic subunit (320 aa).

Arg68 and Thr69 together coordinate carbamoyl phosphate. Lys96 contacts L-aspartate. 3 residues coordinate carbamoyl phosphate: Arg118, His148, and Gln151. L-aspartate-binding residues include Arg181 and Arg236. Carbamoyl phosphate-binding residues include Gly277 and Pro278.

It belongs to the aspartate/ornithine carbamoyltransferase superfamily. ATCase family. Heterododecamer (2C3:3R2) of six catalytic PyrB chains organized as two trimers (C3), and six regulatory PyrI chains organized as three dimers (R2).

It carries out the reaction carbamoyl phosphate + L-aspartate = N-carbamoyl-L-aspartate + phosphate + H(+). The protein operates within pyrimidine metabolism; UMP biosynthesis via de novo pathway; (S)-dihydroorotate from bicarbonate: step 2/3. Catalyzes the condensation of carbamoyl phosphate and aspartate to form carbamoyl aspartate and inorganic phosphate, the committed step in the de novo pyrimidine nucleotide biosynthesis pathway. This chain is Aspartate carbamoyltransferase catalytic subunit, found in Polaromonas sp. (strain JS666 / ATCC BAA-500).